Consider the following 249-residue polypeptide: Triosephosphate isomerase (249 aa).

Substrate-binding residues include Asn-12 and Lys-14. Lys-14 bears the N6-acetyllysine mark. Tyr-68 bears the 3'-nitrotyrosine mark. At Ser-80 the chain carries Phosphoserine. The active-site Electrophile is the His-96. A Phosphoserine modification is found at Ser-106. Lys-142 is covalently cross-linked (Glycyl lysine isopeptide (Lys-Gly) (interchain with G-Cter in SUMO1)). Position 149 is an N6-succinyllysine (Lys-149). An N6-acetyllysine; alternate modification is found at Lys-156. The residue at position 156 (Lys-156) is an N6-succinyllysine; alternate. Position 159 is a phosphoserine (Ser-159). The Proton acceptor role is filled by Glu-166. A Phosphothreonine modification is found at Thr-173. N6-acetyllysine; alternate is present on Lys-194. Lys-194 is modified (N6-succinyllysine; alternate). The residue at position 194 (Lys-194) is an N6-methyllysine; alternate. Ser-198 carries the phosphoserine modification. 3'-nitrotyrosine is present on Tyr-209. Residue Ser-212 is modified to Phosphoserine. A Phosphothreonine modification is found at Thr-214. A Phosphoserine modification is found at Ser-223. Position 238 is an N6-acetyllysine (Lys-238).

The protein belongs to the triosephosphate isomerase family. As to quaternary structure, homodimer.

It is found in the cytoplasm. It carries out the reaction dihydroxyacetone phosphate = methylglyoxal + phosphate. It catalyses the reaction D-glyceraldehyde 3-phosphate = dihydroxyacetone phosphate. Its pathway is carbohydrate degradation; glycolysis; D-glyceraldehyde 3-phosphate from glycerone phosphate: step 1/1. It participates in carbohydrate biosynthesis; gluconeogenesis. Functionally, triosephosphate isomerase is an extremely efficient metabolic enzyme that catalyzes the interconversion between dihydroxyacetone phosphate (DHAP) and D-glyceraldehyde-3-phosphate (G3P) in glycolysis and gluconeogenesis. In terms of biological role, it is also responsible for the non-negligible production of methylglyoxal a reactive cytotoxic side-product that modifies and can alter proteins, DNA and lipids. The polypeptide is Triosephosphate isomerase (TPI1) (Canis lupus familiaris (Dog)).